The chain runs to 111 residues: uncharacterized protein (111 aa).

The protein resides in the cytoplasm. It localises to the nucleus. This is an uncharacterized protein from Saccharomyces cerevisiae (strain ATCC 204508 / S288c) (Baker's yeast).